We begin with the raw amino-acid sequence, 121 residues long: Nitrogen fixation nifHD region GlnB-like protein 2 (121 aa).

The protein belongs to the P(II) protein family.

Could be involved in the regulation of nitrogen fixation. This is Nitrogen fixation nifHD region GlnB-like protein 2 (glnBB) from Methanothermobacter marburgensis (strain ATCC BAA-927 / DSM 2133 / JCM 14651 / NBRC 100331 / OCM 82 / Marburg) (Methanobacterium thermoautotrophicum).